Reading from the N-terminus, the 78-residue chain is Large ribosomal subunit protein bL28 (78 aa).

The protein belongs to the bacterial ribosomal protein bL28 family.

The chain is Large ribosomal subunit protein bL28 from Edwardsiella ictaluri (strain 93-146).